The sequence spans 504 residues: Glucose-6-phosphate isomerase (504 aa).

The Proton donor role is filled by Glu-333. Active-site residues include His-364 and Lys-473.

It belongs to the GPI family.

The protein resides in the cytoplasm. It catalyses the reaction alpha-D-glucose 6-phosphate = beta-D-fructose 6-phosphate. Its pathway is carbohydrate biosynthesis; gluconeogenesis. It functions in the pathway carbohydrate degradation; glycolysis; D-glyceraldehyde 3-phosphate and glycerone phosphate from D-glucose: step 2/4. Functionally, catalyzes the reversible isomerization of glucose-6-phosphate to fructose-6-phosphate. The sequence is that of Glucose-6-phosphate isomerase from Xanthomonas euvesicatoria pv. vesicatoria (strain 85-10) (Xanthomonas campestris pv. vesicatoria).